We begin with the raw amino-acid sequence, 68 residues long: DNA-directed RNA polymerase subunit omega (68 aa).

This sequence belongs to the RNA polymerase subunit omega family. As to quaternary structure, the RNAP catalytic core consists of 2 alpha, 1 beta, 1 beta' and 1 omega subunit. When a sigma factor is associated with the core the holoenzyme is formed, which can initiate transcription.

The catalysed reaction is RNA(n) + a ribonucleoside 5'-triphosphate = RNA(n+1) + diphosphate. In terms of biological role, promotes RNA polymerase assembly. Latches the N- and C-terminal regions of the beta' subunit thereby facilitating its interaction with the beta and alpha subunits. This chain is DNA-directed RNA polymerase subunit omega, found in Desulfatibacillum aliphaticivorans.